The following is a 315-amino-acid chain: Probable diguanylate cyclase DgcF (315 aa).

4 helical membrane passes run 10 to 30, 41 to 61, 80 to 100, and 116 to 136; these read FSTGVLIVPCMLTLAIPGVLP, IALIVSVIASVVIGGAGSLAF, LLTFVTGAVEIVLVANSVIDI, and LGIATMAICPIMVSFSVAAIN. A GGDEF domain is found at 173-310; it reads QHLTVMLLDI…GRNRTSTMRY (138 aa). Mg(2+) contacts are provided by Asp181 and Ile182. Substrate contacts are provided by Asn189, His194, and Asp198. Mg(2+) is bound at residue Glu224.

As to quaternary structure, homodimer. It depends on Mg(2+) as a cofactor.

The protein localises to the cell membrane. It catalyses the reaction 2 GTP = 3',3'-c-di-GMP + 2 diphosphate. It functions in the pathway purine metabolism; 3',5'-cyclic di-GMP biosynthesis. Its function is as follows. Catalyzes the synthesis of cyclic-di-GMP (c-di-GMP) via the condensation of 2 GTP molecules. The chain is Probable diguanylate cyclase DgcF from Escherichia coli (strain K12).